We begin with the raw amino-acid sequence, 66 residues long: Large ribosomal subunit protein uL29 (66 aa).

It belongs to the universal ribosomal protein uL29 family. As to quaternary structure, part of the 50S ribosomal subunit.

The protein is Large ribosomal subunit protein uL29 of Thermococcus kodakarensis (strain ATCC BAA-918 / JCM 12380 / KOD1) (Pyrococcus kodakaraensis (strain KOD1)).